Consider the following 411-residue polypeptide: Tyrosine--tRNA ligase (411 aa).

Residue Tyr-34 coordinates L-tyrosine. The 'HIGH' region motif lies at 39 to 48 (CTATSLHIGS). Positions 171 and 175 each coordinate L-tyrosine. Residues 231 to 235 (KMGKT) carry the 'KMSKS' region motif. Lys-234 lines the ATP pocket. Positions 345–411 (ISAYELFHEA…GKKRHILVRV (67 aa)) constitute an S4 RNA-binding domain.

The protein belongs to the class-I aminoacyl-tRNA synthetase family. TyrS type 1 subfamily. As to quaternary structure, homodimer.

It localises to the cytoplasm. It carries out the reaction tRNA(Tyr) + L-tyrosine + ATP = L-tyrosyl-tRNA(Tyr) + AMP + diphosphate + H(+). Functionally, catalyzes the attachment of tyrosine to tRNA(Tyr) in a two-step reaction: tyrosine is first activated by ATP to form Tyr-AMP and then transferred to the acceptor end of tRNA(Tyr). This Rickettsia massiliae (strain Mtu5) protein is Tyrosine--tRNA ligase.